Reading from the N-terminus, the 426-residue chain is Gamma-glutamyl phosphate reductase (426 aa).

Belongs to the gamma-glutamyl phosphate reductase family.

It is found in the cytoplasm. It catalyses the reaction L-glutamate 5-semialdehyde + phosphate + NADP(+) = L-glutamyl 5-phosphate + NADPH + H(+). The protein operates within amino-acid biosynthesis; L-proline biosynthesis; L-glutamate 5-semialdehyde from L-glutamate: step 2/2. Functionally, catalyzes the NADPH-dependent reduction of L-glutamate 5-phosphate into L-glutamate 5-semialdehyde and phosphate. The product spontaneously undergoes cyclization to form 1-pyrroline-5-carboxylate. The polypeptide is Gamma-glutamyl phosphate reductase (Cupriavidus necator (strain ATCC 17699 / DSM 428 / KCTC 22496 / NCIMB 10442 / H16 / Stanier 337) (Ralstonia eutropha)).